The chain runs to 514 residues: Serine/threonine-protein kinase 33 (514 aa).

Over residues 65–86 the composition is skewed to basic and acidic residues; sequence INRDITSRKDLPSRTSNVERKA. A disordered region spans residues 65-91; it reads INRDITSRKDLPSRTSNVERKASQQQW. A Protein kinase domain is found at 116 to 381; sequence YTFGRILGKG…AKELLDNQWL (266 aa). Residues 122–130 and K145 each bind ATP; that span reads LGKGSFGIV. The Proton acceptor role is filled by D238. 2 disordered regions span residues 402-468 and 485-514; these read KNNP…DMCS and MEKT…KKKL. Residue S407 is modified to Phosphoserine. A compositionally biased stretch (basic and acidic residues) spans 413-426; that stretch reads TEEKNKPSTEEKLK. The segment covering 449–468 has biased composition (polar residues); it reads STAYEKQFPATSKDNFDMCS.

The protein belongs to the protein kinase superfamily. CAMK Ser/Thr protein kinase family. CaMK subfamily. In terms of assembly, homodimer. Post-translationally, autophosphorylated. Highly expressed in testis, fetal lung and heart, followed by pituitary gland, kidney, interventricular septum, pancreas, heart, trachea, thyroid gland and uterus. Weak hybridization signals were observed in the following tissues: amygdala, aorta, esophagus, colon ascending, colon transverse, skeletal muscle, spleen, peripheral blood leukocyte, lymph node, bone marrow, placenta, prostate, liver, salivary gland, mammary gland, some tumor cell lines, fetal brain, fetal liver, fetal spleen and fetal thymus. No signal at all was detectable in RNA from tissues of the nervous system.

Its subcellular location is the cytoplasm. The protein resides in the cytoskeleton. It is found in the perinuclear region. It catalyses the reaction L-seryl-[protein] + ATP = O-phospho-L-seryl-[protein] + ADP + H(+). The enzyme catalyses L-threonyl-[protein] + ATP = O-phospho-L-threonyl-[protein] + ADP + H(+). With respect to regulation, specifically inhibited by CDD-2807 ((3-([1,1'-Biphenyl]-2-ylethynyl)-1H-indazol-5-yl)(2,6-diazaspiro[3.5]nonan-2-yl)methanone). Its function is as follows. Serine/threonine protein kinase required for spermatid differentiation and male fertility. Promotes sperm flagella assembly during spermatogenesis by mediating phosphorylation of fibrous sheath proteins AKAP3 and AKAP4. Also phosphorylates vimentin/VIM, thereby regulating the dynamic behavior of the intermediate filament cytoskeleton. This Homo sapiens (Human) protein is Serine/threonine-protein kinase 33.